The sequence spans 689 residues: Glycine--tRNA ligase beta subunit (689 aa).

The protein belongs to the class-II aminoacyl-tRNA synthetase family. Tetramer of two alpha and two beta subunits.

Its subcellular location is the cytoplasm. The catalysed reaction is tRNA(Gly) + glycine + ATP = glycyl-tRNA(Gly) + AMP + diphosphate. The polypeptide is Glycine--tRNA ligase beta subunit (Salmonella choleraesuis (strain SC-B67)).